Consider the following 245-residue polypeptide: Chromosome partition protein MukE (245 aa).

The segment at Pro213–Glu245 is disordered. Over residues Asp224–Glu245 the composition is skewed to acidic residues.

Belongs to the MukE family. Interacts, and probably forms a ternary complex, with MukF and MukB. The complex formation is stimulated by calcium or magnesium.

It is found in the cytoplasm. It localises to the nucleoid. In terms of biological role, involved in chromosome condensation, segregation and cell cycle progression. May participate in facilitating chromosome segregation by condensation DNA from both sides of a centrally located replisome during cell division. Probably acts via its interaction with MukB and MukF. In Actinobacillus succinogenes (strain ATCC 55618 / DSM 22257 / CCUG 43843 / 130Z), this protein is Chromosome partition protein MukE.